The primary structure comprises 323 residues: RNA polymerase II holoenzyme cyclin-like subunit (323 aa).

Residues Asp45–Ile176 form the Cyclin N-terminal domain.

It belongs to the cyclin family. Cyclin C subfamily. As to quaternary structure, component of the SRB8-11 complex which consists of SRB8, SSN2/SRB9, SSN3/SRB10 and SSN8/SRB11. The SRB8-11 complex associates with the Mediator complex. The SSN3/SRB10 and SSN8/SRB11 kinase-cyclin pair also associate with the RNA polymerase II holoenzyme. Interacts with ASK10.

Its subcellular location is the nucleus. Its function is as follows. Component of the SRB8-11 complex. The SRB8-11 complex is a regulatory module of the Mediator complex which is itself involved in regulation of basal and activated RNA polymerase II-dependent transcription. The SRB8-11 complex may be involved in the transcriptional repression of a subset of genes regulated by Mediator. It may inhibit the association of the Mediator complex with RNA polymerase II to form the holoenzyme complex. The SRB8-11 complex phosphorylates the C-terminal domain (CTD) of the largest subunit of RNA polymerase II RPB1 at serines 2 and 5. The SSN3/SRB10 and SSN8/SRB11 kinase-cyclin pair may also positively and negatively regulate numerous transcriptional activators in response to changes in nutritional and physiological conditions. The polypeptide is RNA polymerase II holoenzyme cyclin-like subunit (SSN8) (Saccharomyces cerevisiae (strain ATCC 204508 / S288c) (Baker's yeast)).